The sequence spans 166 residues: Small ribosomal subunit protein uS9 (166 aa).

The interval 135 to 166 (KKAGFLTRDPRATERKKYGLKKARKAPQYSKR) is disordered. A compositionally biased stretch (basic and acidic residues) spans 142 to 151 (RDPRATERKK). Residues 152–166 (YGLKKARKAPQYSKR) are compositionally biased toward basic residues.

The protein belongs to the universal ribosomal protein uS9 family.

The protein is Small ribosomal subunit protein uS9 of Mycobacterium avium (strain 104).